A 493-amino-acid chain; its full sequence is MALRIYNTLTGEKDTFVPLHPGKAGMYVCGVTVYDYCHIGHARANVVFDVIYRYLGYSGYAVTYVRNFTDIDDKIINRANQEGVDYTTISERYIEAFNQDMARLGLAKPTVEPKATDHMGGIISVIETLIAKGHAYESDGDVYYAVESFPSYLRLSGRNLEDMLAGARVEVDDRKRNPMDFALWKGSKPGEPSWDSPWGAGRPGWHIECSAMSMEYLGKTFDIHGGGKDLVFPHHENEIAQSEAANGCQFVRYWMHNGFVNINSEKMSKSLGNFFTIREVLEQYDPETLRFFILSAHYRSPIDFSDQNLNDAQAGLERIYSCLAAVDGAMEGQDVPNQPVEGAPLPPAGAELHEKLQSLISRFREAMDDDFNTAQALGVLFEAVRATNRFMAESGDQTPATLALLGQVRRLFAETGDVLGLFTSQPAAWLESIKQAKSDQMEISPQEIEQLIAERAAARTNRDFKRGDEIRDLLLQKGIQLLDSPQGTTWNIR.

Cysteine 29 provides a ligand contact to Zn(2+). The 'HIGH' region signature appears at 31-41 (VTVYDYCHIGH). Zn(2+) contacts are provided by cysteine 209, histidine 234, and glutamate 238. The 'KMSKS' region signature appears at 266 to 270 (KMSKS). Lysine 269 serves as a coordination point for ATP.

It belongs to the class-I aminoacyl-tRNA synthetase family. In terms of assembly, monomer. Zn(2+) is required as a cofactor.

The protein localises to the cytoplasm. It carries out the reaction tRNA(Cys) + L-cysteine + ATP = L-cysteinyl-tRNA(Cys) + AMP + diphosphate. The chain is Cysteine--tRNA ligase from Pelobacter propionicus (strain DSM 2379 / NBRC 103807 / OttBd1).